The sequence spans 101 residues: Small ribosomal subunit protein uS14 (101 aa).

It belongs to the universal ribosomal protein uS14 family. In terms of assembly, part of the 30S ribosomal subunit. Contacts proteins S3 and S10.

Its function is as follows. Binds 16S rRNA, required for the assembly of 30S particles and may also be responsible for determining the conformation of the 16S rRNA at the A site. The polypeptide is Small ribosomal subunit protein uS14 (Chlamydia abortus (strain DSM 27085 / S26/3) (Chlamydophila abortus)).